The chain runs to 79 residues: Sigma-O factor regulatory protein RsoA (79 aa).

Its function is as follows. Together with RNA polymerase sigma factor SigO, positively regulates the expression of at least three operons, including oxdC-yvrL, sigO-rsoA and yvrJ. Required for the acid stress-dependent induction of the oxalate decarboxylase oxdC. This is Sigma-O factor regulatory protein RsoA (rsoA) from Bacillus subtilis (strain 168).